A 74-amino-acid polypeptide reads, in one-letter code: Protein F9 homolog (74 aa).

Residues 1–34 lie on the Virion surface side of the membrane; it reads GHAAANCALARVATALTRRVPASRHGLAEGGTPP. A helical membrane pass occupies residues 35–55; sequence WTLLLAVAAVAVLGVVAISLL. The Intravirion segment spans residues 56 to 73; sequence RRALRIRFRYSKSIQTLR.

It belongs to the chordopoxvirinae L1 protein family.

It localises to the virion membrane. The sequence is that of Protein F9 homolog from Capra hircus (Goat).